We begin with the raw amino-acid sequence, 90 residues long: 10.1 kDa protein (90 aa).

This Pseudomonas aeruginosa (Bacteriophage Pf1) protein is 10.1 kDa protein.